We begin with the raw amino-acid sequence, 209 residues long: High-affinity nitrate transporter 3.2 (209 aa).

A signal peptide spans 1-22 (MAIHTLLFVSLLIFSLIESSSG). A helical transmembrane segment spans residues 177-197 (LDIASTFFSVFSVVSLFVFFV).

This sequence belongs to the NAR2 family. Bearly detected in roots and shoots.

Its subcellular location is the cell membrane. Acts as a dual component transporter with NTR2.1. Required for high-affinity nitrate transport. This Arabidopsis thaliana (Mouse-ear cress) protein is High-affinity nitrate transporter 3.2.